The primary structure comprises 1177 residues: DNA-directed RNA polymerase subunit beta (1177 aa).

Residues 1154–1177 form a disordered region; sequence RDTEDDDDHQSADKLNVEVETTKE. Residues 1162-1177 are compositionally biased toward basic and acidic residues; sequence HQSADKLNVEVETTKE.

It belongs to the RNA polymerase beta chain family. As to quaternary structure, the RNAP catalytic core consists of 2 alpha, 1 beta, 1 beta' and 1 omega subunit. When a sigma factor is associated with the core the holoenzyme is formed, which can initiate transcription.

It catalyses the reaction RNA(n) + a ribonucleoside 5'-triphosphate = RNA(n+1) + diphosphate. DNA-dependent RNA polymerase catalyzes the transcription of DNA into RNA using the four ribonucleoside triphosphates as substrates. The chain is DNA-directed RNA polymerase subunit beta from Bacillus mycoides (strain KBAB4) (Bacillus weihenstephanensis).